A 332-amino-acid polypeptide reads, in one-letter code: Transaldolase (332 aa).

Residue Lys-136 is the Schiff-base intermediate with substrate of the active site.

The protein belongs to the transaldolase family. Type 1 subfamily.

The protein localises to the cytoplasm. The enzyme catalyses D-sedoheptulose 7-phosphate + D-glyceraldehyde 3-phosphate = D-erythrose 4-phosphate + beta-D-fructose 6-phosphate. It functions in the pathway carbohydrate degradation; pentose phosphate pathway; D-glyceraldehyde 3-phosphate and beta-D-fructose 6-phosphate from D-ribose 5-phosphate and D-xylulose 5-phosphate (non-oxidative stage): step 2/3. Functionally, transaldolase is important for the balance of metabolites in the pentose-phosphate pathway. The sequence is that of Transaldolase from Trichormus variabilis (strain ATCC 29413 / PCC 7937) (Anabaena variabilis).